Consider the following 287-residue polypeptide: MSTSNYINSFAPAKINLGLRIFGKRKDGYHELQTLMAPISIGDRIEITLLSSGIEFESTGDFDVPKDSSNLALKAALLFLSHHGLKTGLRIKLTKIVPPGAGLGGGSSDAAAVLFSLNRMLAIDETMENLIRLAAQLGSDVPFFLLRKPALCTGRGEILHPTSSFPYPRKGLLIYPGFPVSTPWAYKTYDELCKKGLILPSPSQESDKPVNDLEEAVFSKYLWLPAVKKWIQSHFNPEVCLMSGSGSSVFALFSKEDPRFFNDLIQQAQAYLGPGCWIRLFEILEQF.

Residue lysine 14 is part of the active site. Proline 98 to serine 108 is an ATP binding site. Residue aspartate 140 is part of the active site.

It belongs to the GHMP kinase family. IspE subfamily.

The catalysed reaction is 4-CDP-2-C-methyl-D-erythritol + ATP = 4-CDP-2-C-methyl-D-erythritol 2-phosphate + ADP + H(+). It functions in the pathway isoprenoid biosynthesis; isopentenyl diphosphate biosynthesis via DXP pathway; isopentenyl diphosphate from 1-deoxy-D-xylulose 5-phosphate: step 3/6. Catalyzes the phosphorylation of the position 2 hydroxy group of 4-diphosphocytidyl-2C-methyl-D-erythritol. This chain is 4-diphosphocytidyl-2-C-methyl-D-erythritol kinase, found in Methylacidiphilum infernorum (isolate V4) (Methylokorus infernorum (strain V4)).